The chain runs to 86 residues: Large ribosomal subunit protein bL27 (86 aa).

The interval Met1–Leu21 is disordered.

The protein belongs to the bacterial ribosomal protein bL27 family.

In Mycobacterium tuberculosis (strain CDC 1551 / Oshkosh), this protein is Large ribosomal subunit protein bL27 (rpmA).